The chain runs to 572 residues: Zyxin (572 aa).

An N-acetylalanine modification is found at Ala2. The disordered stretch occupies residues 23-351; sequence QKKFGPVVAP…VRSPGAPGPL (329 aa). Composition is skewed to pro residues over residues 63-78 and 93-108; these read IPPP…PPPL and FPPP…PPAP. A phosphoserine mark is found at Ser116, Ser142, Ser143, Ser169, and Ser170. Low complexity predominate over residues 143 to 156; that stretch reads SIDLEIDSLSSLLD. Thr179 bears the Phosphothreonine mark. Positions 202–239 are enriched in low complexity; it reads SPSSSQPLPQVPAPAQSQTQFHVQPQPQPKPQVQLHVQ. The span at 240 to 252 shows a compositional bias: polar residues; sequence SQTQPVSLANTQP. Arg253 carries the post-translational modification Asymmetric dimethylarginine. Over residues 253-265 the composition is skewed to pro residues; sequence RGPPASSPAPAPK. A Phosphoserine modification is found at Ser259. Position 265 is an N6-acetyllysine (Lys265). Ser267 is modified (phosphoserine). Thr270 is modified (phosphothreonine). Lys272 bears the N6-acetyllysine mark. Phosphothreonine is present on Thr274. Lys279 is modified (N6-acetyllysine). Phosphoserine is present on residues Ser281, Ser288, and Ser308. The segment covering 305-318 has biased composition (polar residues); sequence GTGSPQPPSFTYAQ. Over residues 319–330 the composition is skewed to basic and acidic residues; it reads QREKPRVQEKQH. A Phosphoserine modification is found at Ser344. 3 LIM zinc-binding domains span residues 384-443, 444-503, and 504-570; these read CGRC…TLEK, CNTC…YAPR, and CSVC…TARA.

This sequence belongs to the zyxin/ajuba family. As to quaternary structure, interacts with HPV type 6 protein E6. Does not interact significantly with E6 proteins from HPV types 11, 16, or 18. Interacts, via the Pro-rich regions, with the EVH1 domains of ENAH, EVL and VASP. Interacts with the first LIM domain of TES. Interacts with NEBL (isoform 2). Interacts with SYNPO2. In terms of assembly, (Microbial infection) Interacts with human papillomavirus type 6/HPV6 protein E6. Does not interact significantly with E6 proteins from HPV types 11, 16, or 18.

It is found in the cytoplasm. The protein localises to the cytoskeleton. Its subcellular location is the nucleus. The protein resides in the cell junction. It localises to the focal adhesion. Functionally, adhesion plaque protein. Binds alpha-actinin and the CRP protein. Important for targeting TES and ENA/VASP family members to focal adhesions and for the formation of actin-rich structures. May be a component of a signal transduction pathway that mediates adhesion-stimulated changes in gene expression. The protein is Zyxin (ZYX) of Homo sapiens (Human).